We begin with the raw amino-acid sequence, 358 residues long: Cinnamyl alcohol dehydrogenase 1 (358 aa).

The 329-residue stretch at 21 to 349 (GILTPYTYTL…KNDVRYRFVV (329 aa)) folds into the Enoyl reductase (ER) domain. Cys-48 serves as a coordination point for Zn(2+). An NADP(+)-binding site is contributed by Ser-50. His-70, Glu-71, Cys-101, Cys-104, Cys-107, Cys-115, and Cys-164 together coordinate Zn(2+). Residues Thr-168, 189–194 (GLGGVG), 212–217 (SSSDKK), Thr-252, Gly-276, and 299–301 (SFV) each bind NADP(+).

It belongs to the zinc-containing alcohol dehydrogenase family. As to quaternary structure, homodimer. Requires Zn(2+) as cofactor.

The enzyme catalyses (E)-cinnamyl alcohol + NADP(+) = (E)-cinnamaldehyde + NADPH + H(+). It carries out the reaction (E)-coniferol + NADP(+) = (E)-coniferaldehyde + NADPH + H(+). The catalysed reaction is (E)-sinapyl alcohol + NADP(+) = (E)-sinapaldehyde + NADPH + H(+). It catalyses the reaction (E)-4-coumaroyl alcohol + NADP(+) = (E)-4-coumaraldehyde + NADPH + H(+). Its pathway is aromatic compound metabolism; phenylpropanoid biosynthesis. Functionally, involved in lignin biosynthesis. Catalyzes the final step specific for the production of lignin monomers. Catalyzes the NADPH-dependent reduction of coniferaldehyde, 5-hydroxyconiferaldehyde, sinapaldehyde, 4-coumaraldehyde and caffeyl aldehyde to their respective alcohols. Can use coumaraldehyde and, with a lower efficiency, coniferaldehyde and sinapaldehyde as substrates. This chain is Cinnamyl alcohol dehydrogenase 1, found in Medicago truncatula (Barrel medic).